A 325-amino-acid chain; its full sequence is Bifunctional nuclease 1 (325 aa).

A BFN domain is found at 117–252 (CVHNNPQGGH…YLAYSDGMRV (136 aa)). The 35-residue stretch at 284–318 (TKEFNILSKMMQAVDEERYDEAAEWRDKLGQFRAK) folds into the UVR domain.

Belongs to the bifunctional nuclease family.

It localises to the nucleus. Functionally, bifunctional nuclease with both RNase and DNase activities. Involved in basal defense response. Participates in abscisic acid-derived callose deposition following infection by a necrotrophic pathogen. This Arabidopsis thaliana (Mouse-ear cress) protein is Bifunctional nuclease 1 (BBD1).